A 220-amino-acid chain; its full sequence is Octanoyltransferase (220 aa).

Residues 31–217 (ENTPDEIWLV…HFAEILGYNA (187 aa)) form the BPL/LPL catalytic domain. Substrate is bound by residues 70-77 (RGGQITYH), 146-148 (SLG), and 159-161 (GLA). C177 functions as the Acyl-thioester intermediate in the catalytic mechanism.

Belongs to the LipB family.

It is found in the cytoplasm. It catalyses the reaction octanoyl-[ACP] + L-lysyl-[protein] = N(6)-octanoyl-L-lysyl-[protein] + holo-[ACP] + H(+). The protein operates within protein modification; protein lipoylation via endogenous pathway; protein N(6)-(lipoyl)lysine from octanoyl-[acyl-carrier-protein]: step 1/2. In terms of biological role, catalyzes the transfer of endogenously produced octanoic acid from octanoyl-acyl-carrier-protein onto the lipoyl domains of lipoate-dependent enzymes. Lipoyl-ACP can also act as a substrate although octanoyl-ACP is likely to be the physiological substrate. The polypeptide is Octanoyltransferase (Actinobacillus succinogenes (strain ATCC 55618 / DSM 22257 / CCUG 43843 / 130Z)).